An 875-amino-acid chain; its full sequence is MKLHRLALTNYRGIAHRDVEFPDHGVVVVCGANEIGKSSMVEALDLLLEYKDRSTKKEVKQVKPTNADVGSEVIAEISSGPYRFVYRKRFHKRCETELTVLAPRREQLTGDEAHERVRTMLAETVDTELWHAQRVLQAASTAAVDLSGCDALSRALDLAAGDDAALSGTESLLIERIEAEYARYFTPTGRPTGEWSAAVSRLAAAEAAVADCAAAVAEVDDGVRRHTELTEQVAELSQQLLAHQLRLEAARVAAEKIAAITDDAREAKLIATAAAATSGASTAAHAGRLGLLTEIDTRTAAVVAAEAKARQAADEQATARAEAEACDAALTEATQVLTAVRLRAESARRTLDQLADCEEADRLAARLARIDDIEGDRDRVCAELSAVTLTEELLSRIERAAAAVDRGGAQLASISAAVEFTAAVDIELGVGDQRVSLSAGQSWSVTATGPTEVKVPGVLTARIVPGATALDFQAKYAAAQQELADALAAGEVADLAAARSADLCRRELLSRRDQLTATLAGLCGDEQVDQLRSRLEQLCAGQPAELDLVSTDTATARAELDAVEAARIAAEKDCETRRQIAAGAARRLAETSTRATVLQNAAAAESAELGAAMTRLACERASVGDDELAAKAEADLRVLQTAEQRVIDLADELAATAPDAVAAELAEAADAVELLRERHDEAIRALHEVGVELSVFGTQGRKGKLDAAETEREHAASHHARVGRRARAARLLRSVMARHRDTTRLRYVEPYRAELHRLGRPVFGPSFEVEVDTDLRIRSRTLDDRTVPYECLSGGAKEQLGILARLAGAALVAKEDAVPVLIDDALGFTDPERLAKMGEVFDTIGADGQVIVLTCSPTRYGGVKGAHRIDLDAIQ.

This is an uncharacterized protein from Mycobacterium bovis (strain ATCC BAA-935 / AF2122/97).